A 175-amino-acid polypeptide reads, in one-letter code: Bcl-2-related protein A1 (175 aa).

The BH1 motif lies at Lys77–Gly97. The BH2 signature appears at Glu132–Lys147.

It belongs to the Bcl-2 family. As to quaternary structure, interacts directly with BAK1, BID, BMF and BBC3. Interacts directly with BCL2L11/BIM. Interacts with BAX isoform Sigma. Interacts directly with PMAIP1. Interacts with RTL10/BOP. Interacts with ING4. Interacts with UBQLN4. In terms of tissue distribution, seems to be restricted to the hematopoietic compartment. Expressed in peripheral blood, spleen, and bone marrow, at moderate levels in lung, small intestine and testis, at a minimal levels in other tissues. Also found in vascular smooth muscle cells and hematopoietic malignancies.

The protein resides in the cytoplasm. Its function is as follows. Retards apoptosis induced by IL-3 deprivation. May function in the response of hemopoietic cells to external signals and in maintaining endothelial survival during infection. Can inhibit apoptosis induced by serum starvation in the mammary epithelial cell line HC11. This chain is Bcl-2-related protein A1 (BCL2A1), found in Homo sapiens (Human).